The sequence spans 421 residues: Serine--tRNA ligase (421 aa).

Residue 230–232 participates in L-serine binding; the sequence is TAE. 261–263 serves as a coordination point for ATP; it reads RRE. Glu-284 provides a ligand contact to L-serine. 348 to 351 contacts ATP; sequence EISS. Residue Ser-383 coordinates L-serine.

It belongs to the class-II aminoacyl-tRNA synthetase family. Type-1 seryl-tRNA synthetase subfamily. Homodimer. The tRNA molecule binds across the dimer.

It is found in the cytoplasm. It carries out the reaction tRNA(Ser) + L-serine + ATP = L-seryl-tRNA(Ser) + AMP + diphosphate + H(+). The catalysed reaction is tRNA(Sec) + L-serine + ATP = L-seryl-tRNA(Sec) + AMP + diphosphate + H(+). It participates in aminoacyl-tRNA biosynthesis; selenocysteinyl-tRNA(Sec) biosynthesis; L-seryl-tRNA(Sec) from L-serine and tRNA(Sec): step 1/1. In terms of biological role, catalyzes the attachment of serine to tRNA(Ser). Is also able to aminoacylate tRNA(Sec) with serine, to form the misacylated tRNA L-seryl-tRNA(Sec), which will be further converted into selenocysteinyl-tRNA(Sec). This is Serine--tRNA ligase from Finegoldia magna (strain ATCC 29328 / DSM 20472 / WAL 2508) (Peptostreptococcus magnus).